We begin with the raw amino-acid sequence, 1819 residues long: Non-reducing polyketide synthase nscA (1819 aa).

The segment at 25–277 is N-terminal acylcarrier protein transacylase domain (SAT); the sequence is RRLDQHSKDR…PLPVYDGLCH (253 aa). The 434-residue stretch at 413-846 folds into the Ketosynthase family 3 (KS3) domain; that stretch reads SSKLAIVGMA…GGNTTLLLED (434 aa). Residues cysteine 586, histidine 721, and histidine 764 each act as for beta-ketoacyl synthase activity in the active site. Residues 952–1249 are malonyl-CoA:ACP transacylase (MAT) domain; it reads FTSQGAYYHG…MIPSAPAMSS (298 aa). The segment at 1339–1658 is product template (PT) domain; sequence TSLVHQITAE…RLLMDRFFSP (320 aa). The N-terminal hotdog fold stretch occupies residues 1343–1479; it reads HQITAETVEA…AMIRFEDPMA (137 aa). One can recognise a PKS/mFAS DH domain in the interval 1343 to 1653; it reads HQITAETVEA…IRRVPRLLMD (311 aa). Histidine 1375 serves as the catalytic Proton acceptor; for dehydratase activity. The segment at 1507–1653 is C-terminal hotdog fold; it reads ASRLSKPLAY…IRRVPRLLMD (147 aa). The Proton donor; for dehydratase activity role is filled by aspartate 1564. The segment at 1703–1742 is disordered; that stretch reads SSTMASKAPEPAPLLATSSESSTPKESPIVTPAESEREDP. Residues 1719-1730 show a composition bias toward low complexity; sequence TSSESSTPKESP. In terms of domain architecture, Carrier spans 1742–1819; it reads PVDNNMISQC…EMTAWIEEYC (78 aa). Position 1779 is an O-(pantetheine 4'-phosphoryl)serine (serine 1779).

Pantetheine 4'-phosphate serves as cofactor.

It functions in the pathway secondary metabolite biosynthesis. Functionally, non-reducing polyketide synthase; part of the gene cluster that mediates the biosynthesis of neosartoricin B, a prenylated anthracenone that probably exhibits T-cell antiproliferative activity, suggestive of a physiological role as an immunosuppressive agent. The non-reducing polyketide synthase nscA probably synthesizes and cyclizes the decaketide backbone. The hydrolase nscB then mediates the product release through hydrolysis followed by spontaneous decarboxylation. The prenyltransferase nscD catalyzes the addition of the dimethylallyl group to the aromatic C5. The FAD-dependent monooxygenase nscC is then responsible for the stereospecific hydroxylation at C2. Neosartoricin B can be converted into two additional compounds neosartoricins C and D. Neosartoricin C is a spirocyclic compound that is cyclized through the attack of C3 hydroxyl on C14, followed by dehydration. On the other hand, neosartoricin D is a further cyclized compound in which attack of C2 on C14 in neosartoricin C results in the formation of the acetal-containing dioxabicyclo-octanone ring. Both of these compounds are novel and possibly represent related metabolites of the gene cluster. The chain is Non-reducing polyketide synthase nscA from Trichophyton verrucosum (strain HKI 0517).